Consider the following 471-residue polypeptide: 3-hydroxylaminophenol mutase (471 aa).

A GS beta-grasp domain is found at 15 to 100 (NDVKFVDFRF…TCDVVEPSDG (86 aa)). The GS catalytic domain maps to 107 to 471 (PRSIAKRAEA…PVEFEMYYSL (365 aa)).

This sequence belongs to the glutamine synthetase family.

The catalysed reaction is 3-hydroxyaminophenol = aminohydroquinone. With respect to regulation, is inhibited by H(2)O(2). 1,10-phenanthroline inhibits the activity slightly, but other metal cation chelators such as EDTA or tiron have no effect on the activity. Divalent metal cations and hydroxylamine have also no effect on the activity. Due to the relationship of the protein with glutamine synthetases, glutamate and glutamine were tested as inhibitors; neither preincubation of the compounds with the enzyme nor their addition to the assay buffer affected 3HAP mutase activity. In terms of biological role, catalyzes the isomerization of 3-hydroxylaminophenol (3HAP) to aminohydroquinone, a step in the degradative pathway of 3-nitrophenol. The enzymatic reaction is regiospecific since it leads to the formation of aminohydroquinone exclusively, without producing the isomeric 4-aminocatechol. Can also isomerize other hydroxylaminoaromatic compounds, such as hydroxylaminobenzene to a mixture of 2-aminophenol and 4-aminophenol, 4-hydroxylaminotoluene to 6-amino-m-cresol, and 2-chloro-5-hydroxylaminophenol to 2-amino-5-chlorohydroquinone. Does not act on 4-hydroxylaminobenzoate. In Cupriavidus pinatubonensis (strain JMP 134 / LMG 1197) (Cupriavidus necator (strain JMP 134)), this protein is 3-hydroxylaminophenol mutase.